The following is a 359-amino-acid chain: Histidinol-phosphate aminotransferase (359 aa).

The residue at position 217 (K217) is an N6-(pyridoxal phosphate)lysine.

It belongs to the class-II pyridoxal-phosphate-dependent aminotransferase family. Histidinol-phosphate aminotransferase subfamily. In terms of assembly, homodimer. Pyridoxal 5'-phosphate is required as a cofactor.

The enzyme catalyses L-histidinol phosphate + 2-oxoglutarate = 3-(imidazol-4-yl)-2-oxopropyl phosphate + L-glutamate. Its pathway is amino-acid biosynthesis; L-histidine biosynthesis; L-histidine from 5-phospho-alpha-D-ribose 1-diphosphate: step 7/9. In Salmonella heidelberg (strain SL476), this protein is Histidinol-phosphate aminotransferase.